A 171-amino-acid polypeptide reads, in one-letter code: Protein-export protein SecB (171 aa).

Belongs to the SecB family. Homotetramer, a dimer of dimers. One homotetramer interacts with 1 SecA dimer.

Its subcellular location is the cytoplasm. Its function is as follows. One of the proteins required for the normal export of preproteins out of the cell cytoplasm. It is a molecular chaperone that binds to a subset of precursor proteins, maintaining them in a translocation-competent state. It also specifically binds to its receptor SecA. In Gluconacetobacter diazotrophicus (strain ATCC 49037 / DSM 5601 / CCUG 37298 / CIP 103539 / LMG 7603 / PAl5), this protein is Protein-export protein SecB.